Consider the following 311-residue polypeptide: Purine nucleoside phosphorylase (311 aa).

At S2 the chain carries N-acetylserine. Phosphate-binding positions include S46, H81, 101–103, and A134; that span reads RLH. An a purine D-ribonucleoside-binding site is contributed by E219. Position 238 (S238) interacts with phosphate. N261 is a binding site for a purine D-ribonucleoside. S275 is subject to Phosphoserine.

This sequence belongs to the PNP/MTAP phosphorylase family.

The catalysed reaction is a purine D-ribonucleoside + phosphate = a purine nucleobase + alpha-D-ribose 1-phosphate. Its pathway is purine metabolism; purine nucleoside salvage. The purine nucleoside phosphorylases catalyze the phosphorolytic breakdown of the N-glycosidic bond in the beta-(deoxy)ribonucleoside molecules, with the formation of the corresponding free purine bases and pentose-1-phosphate. Cleaves guanosine and inosine. The sequence is that of Purine nucleoside phosphorylase (PNP1) from Saccharomyces cerevisiae (strain ATCC 204508 / S288c) (Baker's yeast).